We begin with the raw amino-acid sequence, 390 residues long: Succinate--CoA ligase [ADP-forming] subunit beta (390 aa).

An ATP-grasp domain is found at 9–244 (KEILKRYGVN…ETQTDTSENE (236 aa)). Residues K46, 53–55 (GRG), E99, L102, and E107 each bind ATP. Positions 199 and 213 each coordinate Mg(2+). Residues N264 and 321–323 (GIV) contribute to the substrate site.

Belongs to the succinate/malate CoA ligase beta subunit family. As to quaternary structure, heterotetramer of two alpha and two beta subunits. Mg(2+) is required as a cofactor.

It catalyses the reaction succinate + ATP + CoA = succinyl-CoA + ADP + phosphate. The enzyme catalyses GTP + succinate + CoA = succinyl-CoA + GDP + phosphate. Its pathway is carbohydrate metabolism; tricarboxylic acid cycle; succinate from succinyl-CoA (ligase route): step 1/1. Its function is as follows. Succinyl-CoA synthetase functions in the citric acid cycle (TCA), coupling the hydrolysis of succinyl-CoA to the synthesis of either ATP or GTP and thus represents the only step of substrate-level phosphorylation in the TCA. The beta subunit provides nucleotide specificity of the enzyme and binds the substrate succinate, while the binding sites for coenzyme A and phosphate are found in the alpha subunit. In Campylobacter curvus (strain 525.92), this protein is Succinate--CoA ligase [ADP-forming] subunit beta.